The primary structure comprises 126 residues: Small ribosomal subunit protein uS12 (126 aa).

Aspartate 89 bears the 3-methylthioaspartic acid mark.

Belongs to the universal ribosomal protein uS12 family. Part of the 30S ribosomal subunit. Contacts proteins S8 and S17. May interact with IF1 in the 30S initiation complex.

With S4 and S5 plays an important role in translational accuracy. In terms of biological role, interacts with and stabilizes bases of the 16S rRNA that are involved in tRNA selection in the A site and with the mRNA backbone. Located at the interface of the 30S and 50S subunits, it traverses the body of the 30S subunit contacting proteins on the other side and probably holding the rRNA structure together. The combined cluster of proteins S8, S12 and S17 appears to hold together the shoulder and platform of the 30S subunit. This Polynucleobacter asymbioticus (strain DSM 18221 / CIP 109841 / QLW-P1DMWA-1) (Polynucleobacter necessarius subsp. asymbioticus) protein is Small ribosomal subunit protein uS12.